A 284-amino-acid polypeptide reads, in one-letter code: Acetylglutamate kinase (284 aa).

Residues 54–55 (GG), Arg76, and Asn179 each bind substrate.

Belongs to the acetylglutamate kinase family. ArgB subfamily.

The protein resides in the cytoplasm. The enzyme catalyses N-acetyl-L-glutamate + ATP = N-acetyl-L-glutamyl 5-phosphate + ADP. Its pathway is amino-acid biosynthesis; L-arginine biosynthesis; N(2)-acetyl-L-ornithine from L-glutamate: step 2/4. Catalyzes the ATP-dependent phosphorylation of N-acetyl-L-glutamate. The chain is Acetylglutamate kinase from Sorangium cellulosum (strain So ce56) (Polyangium cellulosum (strain So ce56)).